The sequence spans 433 residues: Tol-Pal system protein TolB (433 aa).

Residues 1-26 (MNKLRLFRSFFAFLLPFGMATGAAHG) form the signal peptide.

This sequence belongs to the TolB family. As to quaternary structure, the Tol-Pal system is composed of five core proteins: the inner membrane proteins TolA, TolQ and TolR, the periplasmic protein TolB and the outer membrane protein Pal. They form a network linking the inner and outer membranes and the peptidoglycan layer.

The protein resides in the periplasm. Its function is as follows. Part of the Tol-Pal system, which plays a role in outer membrane invagination during cell division and is important for maintaining outer membrane integrity. In Methylobacillus flagellatus (strain ATCC 51484 / DSM 6875 / VKM B-1610 / KT), this protein is Tol-Pal system protein TolB.